Reading from the N-terminus, the 476-residue chain is Probable serine carboxypeptidase CPVL (476 aa).

A signal peptide spans 1 to 22; the sequence is MVGTMWKVIVSLVLLMPGSCDG. N-linked (GlcNAc...) asparagine glycans are attached at residues asparagine 81 and asparagine 132. Serine 204 is a catalytic residue. N-linked (GlcNAc...) asparagine glycosylation is found at asparagine 307 and asparagine 346. Residues aspartate 388 and histidine 448 contribute to the active site.

Belongs to the peptidase S10 family.

Functionally, may be involved in the digestion of phagocytosed particles in the lysosome, participation in an inflammatory protease cascade, and trimming of peptides for antigen presentation. The protein is Probable serine carboxypeptidase CPVL (CPVL) of Pongo abelii (Sumatran orangutan).